We begin with the raw amino-acid sequence, 351 residues long: Photosystem II D2 protein (351 aa).

A helical membrane pass occupies residues 39 to 59; that stretch reads CAFLALGGWLTGTTFVTSWYT. Residue histidine 116 participates in chlorophyll a binding. Residues 123-139 traverse the membrane as a helical segment; that stretch reads GFMLRQFEIARLVGIRP. 2 residues coordinate pheophytin a: glutamine 128 and asparagine 141. The helical transmembrane segment at 151–164 threads the bilayer; that stretch reads VFVSVFLMYPLGQS. Histidine 196 contacts chlorophyll a. The helical transmembrane segment at 206 to 226 threads the bilayer; sequence GALLCAIHGATVENTLFEDGD. Positions 213 and 260 each coordinate a plastoquinone. Histidine 213 provides a ligand contact to Fe cation. Position 267 (histidine 267) interacts with Fe cation. A helical transmembrane segment spans residues 277–293; that stretch reads GLWMSAVGIVGLALNLR.

It belongs to the reaction center PufL/M/PsbA/D family. As to quaternary structure, PSII is composed of 1 copy each of membrane proteins PsbA, PsbB, PsbC, PsbD, PsbE, PsbF, PsbH, PsbI, PsbJ, PsbK, PsbL, PsbM, PsbT, PsbX, PsbY, PsbZ, Psb30/Ycf12, peripheral proteins PsbO, CyanoQ (PsbQ), PsbU, PsbV and a large number of cofactors. It forms dimeric complexes. The cofactor is The D1/D2 heterodimer binds P680, chlorophylls that are the primary electron donor of PSII, and subsequent electron acceptors. It shares a non-heme iron and each subunit binds pheophytin, quinone, additional chlorophylls, carotenoids and lipids. There is also a Cl(-1) ion associated with D1 and D2, which is required for oxygen evolution. The PSII complex binds additional chlorophylls, carotenoids and specific lipids..

Its subcellular location is the cellular thylakoid membrane. It catalyses the reaction 2 a plastoquinone + 4 hnu + 2 H2O = 2 a plastoquinol + O2. In terms of biological role, photosystem II (PSII) is a light-driven water:plastoquinone oxidoreductase that uses light energy to abstract electrons from H(2)O, generating O(2) and a proton gradient subsequently used for ATP formation. It consists of a core antenna complex that captures photons, and an electron transfer chain that converts photonic excitation into a charge separation. The D1/D2 (PsbA/PsbD) reaction center heterodimer binds P680, the primary electron donor of PSII as well as several subsequent electron acceptors. D2 is needed for assembly of a stable PSII complex. In Nostoc punctiforme (strain ATCC 29133 / PCC 73102), this protein is Photosystem II D2 protein.